The following is a 162-amino-acid chain: Photosystem II extrinsic protein V (162 aa).

The N-terminal stretch at 1–25 (MLKRCLWLVVTVLFAWQVFNGTAIA) is a signal peptide. 4 residues coordinate heme c: Cys62, Cys65, His66, and His117.

It belongs to the cytochrome c family. PsbV subfamily. In terms of assembly, PSII is composed of 1 copy each of membrane proteins PsbA, PsbB, PsbC, PsbD, PsbE, PsbF, PsbH, PsbI, PsbJ, PsbK, PsbL, PsbM, PsbT, PsbX, PsbY, PsbZ, Psb30/Ycf12, peripheral proteins PsbO, CyanoQ (PsbQ), PsbU, PsbV and a large number of cofactors. It forms dimeric complexes. Heme c serves as cofactor.

The protein resides in the cellular thylakoid membrane. One of the extrinsic, lumenal subunits of photosystem II (PSII). PSII is a light-driven water plastoquinone oxidoreductase, using light energy to abstract electrons from H(2)O, generating a proton gradient subsequently used for ATP formation. The extrinsic proteins stabilize the structure of photosystem II oxygen-evolving complex (OEC), the ion environment of oxygen evolution and protect the OEC against heat-induced inactivation. Low-potential cytochrome c that plays a role in the OEC of PSII. The sequence is that of Photosystem II extrinsic protein V from Cyanothece sp. (strain PCC 7425 / ATCC 29141).